A 1071-amino-acid chain; its full sequence is SLIT-ROBO Rho GTPase-activating protein 2 (1071 aa).

An F-BAR domain is found at 22–325; that stretch reads KEIRAQLTEQ…AVENLDATSD (304 aa). Basic and acidic residues predominate over residues 181 to 203; that stretch reads LKEAEKQEEKQIGKSVKQEDRQT. The disordered stretch occupies residues 181–211; the sequence is LKEAEKQEEKQIGKSVKQEDRQTPRSPDSTA. Position 206 is a phosphoserine (Ser206). Residues 363–401 adopt a coiled-coil conformation; sequence QSELVQRRQQLQSRLSTLKIENEEVKKTMEATLQTIQDI. A phosphoserine mark is found at Ser427, Ser500, Ser691, Ser695, and Ser724. The 191-residue stretch at 489–679 folds into the Rho-GAP domain; that stretch reads ARRSSTVRKQ…TIIIQHENIF (191 aa). Residues 703-726 are disordered; it reads THGETISAEDSTQDVTAEHHTSDD. The SH3 domain occupies 728-787; it reads CEPIEAIAKFDYVGRTARELSFKKGASLLLYQRASDDWWEGRHNGIDGLIPHQYIVVQDT. Disordered regions lie at residues 794 to 820 and 835 to 936; these read RSSP…GASC and NKQR…NHRP. Ser795 bears the Phosphoserine mark. Composition is skewed to polar residues over residues 857–867, 874–885, and 897–907; these read LGSSLTDSSSP, RPSSQPIMSQNL, and GHGSLNSISRH. At Ser916 the chain carries Phosphoserine. A compositionally biased stretch (polar residues) spans 919–933; that stretch reads IRKTATAGRSKSFNN. Arg927 is modified (symmetric dimethylarginine; by PRMT5). Position 930 is a phosphoserine (Ser930). Residues 940–968 adopt a coiled-coil conformation; it reads EVIAQDIEATMNSALNELQELERQSSAKH. The disordered stretch occupies residues 983–1012; sequence SPVVAPTSEPSSPLHTQLLKDPEPAFQRSA. Residues Ser990, Ser994, Ser1013, and Ser1027 each carry the phosphoserine modification. Residues 1029-1071 are disordered; the sequence is KMAAPVKPPATRPKPTVFPKTNATSPGVNSSASPQSTDKSCTV. A compositionally biased stretch (polar residues) spans 1047-1071; it reads PKTNATSPGVNSSASPQSTDKSCTV.

As to quaternary structure, homodimer. Forms a heterooligomer with SRGAP1 and SRGAP3 through its F-BAR domain. Interacts (via SH3 domain) with GPHN. Interacts (via SH3 domain) with FMNL1 (activated by RAC1); regulates the actin filament severing activity of FMNL1 and actin dynamics. Interacts (via SH3 domain) with FMNL3. Interacts with RAC1; specifically stimulates RAC1 GTPase activity. Interacts (via F-BAR domain) with HOMER1. Interacts with ROBO1 and ROBO2. Interacts with FASLG. Interacts with PRMT5. Post-translationally, methylation at Arg-927 is required for the stimulation of cell migration, dimerization and localization at the plasma membrane protrusions.

Its subcellular location is the cell membrane. The protein resides in the cell projection. It is found in the dendritic spine. The protein localises to the postsynaptic density. It localises to the postsynaptic cell membrane. Its subcellular location is the lamellipodium. The protein resides in the cytoplasmic vesicle. It is found in the phagosome. The protein localises to the nucleus. It localises to the cytoplasm. Its subcellular location is the cytosol. Postsynaptic RAC1 GTPase activating protein (GAP) that plays a key role in neuronal morphogenesis and migration mainly during development of the cerebral cortex. Regulates excitatory and inhibitory synapse maturation and density in cortical pyramidal neurons. SRGAP2/SRGAP2A limits excitatory and inhibitory synapse density through its RAC1-specific GTPase activating activity, while it promotes maturation of both excitatory and inhibitory synapses through its ability to bind to the postsynaptic scaffolding protein HOMER1 at excitatory synapses, and the postsynaptic protein GPHN at inhibitory synapses. Mechanistically, acts by binding and deforming membranes, thereby regulating actin dynamics to regulate cell migration and differentiation. Promotes cell repulsion and contact inhibition of locomotion: localizes to protrusions with curved edges and controls the duration of RAC1 activity in contact protrusions. In non-neuronal cells, may also play a role in cell migration by regulating the formation of lamellipodia and filopodia. The polypeptide is SLIT-ROBO Rho GTPase-activating protein 2 (Rattus norvegicus (Rat)).